The sequence spans 188 residues: dCTP deaminase (188 aa).

DCTP contacts are provided by residues 111–116, 135–137, Gln-156, Tyr-170, and Gln-180; these read KSTYAR and TLE. Glu-137 (proton donor/acceptor) is an active-site residue.

This sequence belongs to the dCTP deaminase family. As to quaternary structure, homotrimer.

It catalyses the reaction dCTP + H2O + H(+) = dUTP + NH4(+). It functions in the pathway pyrimidine metabolism; dUMP biosynthesis; dUMP from dCTP (dUTP route): step 1/2. Catalyzes the deamination of dCTP to dUTP. This Francisella tularensis subsp. tularensis (strain FSC 198) protein is dCTP deaminase.